The sequence spans 520 residues: MGKKSKSQKEAPATESAGSLPFLGGNVSVDPSLASLFEQSAGPVKVPEVPRLGAAPKTKITDVEKDEEESSSAGNDSASEDQFMEDAPESPDAAEEAVQAVPEPPSRKRKRAAGEDLEESYMRRLAKEEQKEQKKRRAERSSSLEEESEDGEKESPQSEDGESEDEGADIPKHEALAGAANDDDELSKSNRTVFLGNVSTKAITSKSAKKELMKHLSSFLSTLPESTGPHKIDSIRFRSTAFASGGKIPKRAAFAKQEIHDDTTPSTNAYAVYSTAQAAKKAPAALNGTVVLDRHLRVDNVAHPAKVDHKRCVFVGNLDFIDNETGTEEGEKKKKNRPPADVEEGLWRTFNAHTKASQSGPAGRGNVESVRVVRDRSTRVGKGFAYVQFYDQNCVEEALLLNDKRFPPLLPRKLRVVRAKKVAKKSVETTGAPKGSDRTLQGRAGKLLGRSSEARLKAAAKKSISQSSLVFEGNRATADGSSRIRVRTKSRGSKAKKDSRSKKRAAAYKAAGGKKAKIGK.

Disordered regions lie at residues 1 to 29 and 41 to 185; these read MGKK…NVSV and AGPV…DDDE. Residues 78–95 show a composition bias toward acidic residues; the sequence is ASEDQFMEDAPESPDAAE. Residues 120 to 132 show a composition bias toward basic and acidic residues; the sequence is SYMRRLAKEEQKE. Acidic residues predominate over residues 144 to 168; the sequence is LEEESEDGEKESPQSEDGESEDEGA. RRM domains lie at 191–303 and 311–421; these read RTVF…NVAH and RCVF…RAKK. The tract at residues 472–520 is disordered; the sequence is EGNRATADGSSRIRVRTKSRGSKAKKDSRSKKRAAAYKAAGGKKAKIGK. Positions 484-520 are enriched in basic residues; the sequence is IRVRTKSRGSKAKKDSRSKKRAAAYKAAGGKKAKIGK.

This sequence belongs to the RRM RBM34 family.

It is found in the nucleus. The protein localises to the nucleolus. Its function is as follows. Involved in pre-25S rRNA processing. This is Nucleolar protein 12 (nop12) from Emericella nidulans (strain FGSC A4 / ATCC 38163 / CBS 112.46 / NRRL 194 / M139) (Aspergillus nidulans).